A 34-amino-acid polypeptide reads, in one-letter code: Photosystem II reaction center protein M (34 aa).

A helical membrane pass occupies residues 7 to 27 (GFVASLLFVLVPTVFLIILFI).

Belongs to the PsbM family. In terms of assembly, PSII is composed of 1 copy each of membrane proteins PsbA, PsbB, PsbC, PsbD, PsbE, PsbF, PsbH, PsbI, PsbJ, PsbK, PsbL, PsbM, PsbT, PsbX, PsbY, PsbZ, Psb30/Ycf12, peripheral proteins PsbO, CyanoQ (PsbQ), PsbU, PsbV and a large number of cofactors. It forms dimeric complexes.

The protein resides in the cellular thylakoid membrane. Functionally, one of the components of the core complex of photosystem II (PSII). PSII is a light-driven water:plastoquinone oxidoreductase that uses light energy to abstract electrons from H(2)O, generating O(2) and a proton gradient subsequently used for ATP formation. It consists of a core antenna complex that captures photons, and an electron transfer chain that converts photonic excitation into a charge separation. This subunit is found at the monomer-monomer interface. The sequence is that of Photosystem II reaction center protein M from Synechococcus sp. (strain WH7803).